The following is a 215-amino-acid chain: Protein-methionine-sulfoxide reductase heme-binding subunit MsrQ (215 aa).

The next 6 membrane-spanning stretches (helical) occupy residues alanine 17–alanine 37, phenylalanine 50–proline 70, alanine 85–aspartate 105, proline 121–asparagine 141, tryptophan 152–leucine 172, and isoleucine 177–valine 197.

The protein belongs to the MsrQ family. As to quaternary structure, heterodimer of a catalytic subunit (MsrP) and a heme-binding subunit (MsrQ). The cofactor is FMN. Heme b is required as a cofactor.

Its subcellular location is the cell inner membrane. Its function is as follows. Part of the MsrPQ system that repairs oxidized periplasmic proteins containing methionine sulfoxide residues (Met-O), using respiratory chain electrons. Thus protects these proteins from oxidative-stress damage caused by reactive species of oxygen and chlorine generated by the host defense mechanisms. MsrPQ is essential for the maintenance of envelope integrity under bleach stress, rescuing a wide series of structurally unrelated periplasmic proteins from methionine oxidation. MsrQ provides electrons for reduction to the reductase catalytic subunit MsrP, using the quinone pool of the respiratory chain. The protein is Protein-methionine-sulfoxide reductase heme-binding subunit MsrQ of Agrobacterium fabrum (strain C58 / ATCC 33970) (Agrobacterium tumefaciens (strain C58)).